The primary structure comprises 177 residues: Endoribonuclease YbeY (177 aa).

Residues His-118, His-122, and His-128 each coordinate Zn(2+).

Belongs to the endoribonuclease YbeY family. It depends on Zn(2+) as a cofactor.

It is found in the cytoplasm. Its function is as follows. Single strand-specific metallo-endoribonuclease involved in late-stage 70S ribosome quality control and in maturation of the 3' terminus of the 16S rRNA. In Mycolicibacterium paratuberculosis (strain ATCC BAA-968 / K-10) (Mycobacterium paratuberculosis), this protein is Endoribonuclease YbeY.